We begin with the raw amino-acid sequence, 276 residues long: RNA-binding protein pno-1 (276 aa).

2 disordered regions span residues 1-30 (MATS…VPST) and 62-101 (DVVM…SRVV). The span at 8–27 (FDDEFPMEEGMPELLDDEDV) shows a compositional bias: acidic residues. Residues 197 to 249 (GDHVSRAIGRIAGKDGRTKLVIENTTKTRIVVANTKIHILGAYQNLKLARNAV) form the KH domain.

Belongs to the PNO1 family. Part of the small subunit (SSU) processome, composed of more than 70 proteins and the RNA chaperone small nucleolar RNA (snoRNA) U3.

The protein resides in the nucleus. It is found in the nucleolus. In terms of biological role, part of the small subunit (SSU) processome, first precursor of the small eukaryotic ribosomal subunit. During the assembly of the SSU processome in the nucleolus, many ribosome biogenesis factors, an RNA chaperone and ribosomal proteins associate with the nascent pre-rRNA and work in concert to generate RNA folding, modifications, rearrangements and cleavage as well as targeted degradation of pre-ribosomal RNA by the RNA exosome. Positively regulates dimethylation of two adjacent adenosines in the loop of a conserved hairpin near the 3'-end of 18S rRNA. The protein is RNA-binding protein pno-1 of Caenorhabditis briggsae.